Reading from the N-terminus, the 282-residue chain is 1,4-dihydroxy-6-naphtoate synthase (282 aa).

Substrate contacts are provided by residues 57-59 (KVS) and 109-110 (TA). H153 functions as the Proton acceptor in the catalytic mechanism.

It belongs to the MqnA/MqnD family. MqnD subfamily.

The enzyme catalyses cyclic dehypoxanthinylfutalosinate = 1,4-dihydroxy-6-naphthoate + dihydroxyacetone. It participates in quinol/quinone metabolism; menaquinone biosynthesis. Functionally, catalyzes the conversion of cyclic dehypoxanthine futalosine (cyclic DHFL) into 1,4-dihydroxy-6-naphthoate, a step in the biosynthesis of menaquinone (MK, vitamin K2). This chain is 1,4-dihydroxy-6-naphtoate synthase, found in Streptomyces coelicolor (strain ATCC BAA-471 / A3(2) / M145).